The primary structure comprises 259 residues: Type III pantothenate kinase (259 aa).

An ATP-binding site is contributed by 6 to 13 (DCGNTNTV). 107–110 (GPDR) serves as a coordination point for substrate. Residue Asp109 is the Proton acceptor of the active site. Asp129 lines the K(+) pocket. Position 132 (Thr132) interacts with ATP. Thr184 contributes to the substrate binding site.

This sequence belongs to the type III pantothenate kinase family. In terms of assembly, homodimer. The cofactor is NH4(+). It depends on K(+) as a cofactor.

The protein resides in the cytoplasm. It catalyses the reaction (R)-pantothenate + ATP = (R)-4'-phosphopantothenate + ADP + H(+). The protein operates within cofactor biosynthesis; coenzyme A biosynthesis; CoA from (R)-pantothenate: step 1/5. Functionally, catalyzes the phosphorylation of pantothenate (Pan), the first step in CoA biosynthesis. This is Type III pantothenate kinase from Ruegeria pomeroyi (strain ATCC 700808 / DSM 15171 / DSS-3) (Silicibacter pomeroyi).